We begin with the raw amino-acid sequence, 72 residues long: DNA gyrase inhibitor YacG (72 aa).

Zn(2+) is bound by residues cysteine 17, cysteine 20, cysteine 32, and cysteine 36. The tract at residues 51 to 72 (IPGPEEEEMSYPPRSDDENRSR) is disordered.

This sequence belongs to the DNA gyrase inhibitor YacG family. Interacts with GyrB. Zn(2+) is required as a cofactor.

Functionally, inhibits all the catalytic activities of DNA gyrase by preventing its interaction with DNA. Acts by binding directly to the C-terminal domain of GyrB, which probably disrupts DNA binding by the gyrase. The chain is DNA gyrase inhibitor YacG from Methylorubrum extorquens (strain PA1) (Methylobacterium extorquens).